Here is a 466-residue protein sequence, read N- to C-terminus: Soluble pyridine nucleotide transhydrogenase (466 aa).

36–45 (ERYQNVGGGC) provides a ligand contact to FAD.

It belongs to the class-I pyridine nucleotide-disulfide oxidoreductase family. FAD serves as cofactor.

The protein resides in the cytoplasm. The catalysed reaction is NAD(+) + NADPH = NADH + NADP(+). Functionally, conversion of NADPH, generated by peripheral catabolic pathways, to NADH, which can enter the respiratory chain for energy generation. The chain is Soluble pyridine nucleotide transhydrogenase from Escherichia fergusonii (strain ATCC 35469 / DSM 13698 / CCUG 18766 / IAM 14443 / JCM 21226 / LMG 7866 / NBRC 102419 / NCTC 12128 / CDC 0568-73).